Reading from the N-terminus, the 246-residue chain is tRNA pseudouridine synthase A (246 aa).

Asp52 serves as the catalytic Nucleophile. Position 111 (Tyr111) interacts with substrate.

It belongs to the tRNA pseudouridine synthase TruA family. As to quaternary structure, homodimer.

It carries out the reaction uridine(38/39/40) in tRNA = pseudouridine(38/39/40) in tRNA. Functionally, formation of pseudouridine at positions 38, 39 and 40 in the anticodon stem and loop of transfer RNAs. This Borreliella afzelii (strain PKo) (Borrelia afzelii) protein is tRNA pseudouridine synthase A.